The sequence spans 487 residues: Protein Optix (487 aa).

The segment at residues 154 to 214 (WDGEQKTHCF…KNRRQRDRAA (61 aa)) is a DNA-binding region (homeobox). Disordered stretches follow at residues 182-330 (NPTK…GAGP) and 443-463 (ASVG…GYHH). Positions 255-277 (GTHSPVPSSLQLQHSPGSTSNGA) are enriched in polar residues. Basic and acidic residues predominate over residues 278-293 (NDREESLSVDDDKPRD). Low complexity predominate over residues 294-312 (LSGSLPLPLSLPLPLASPT). A compositionally biased stretch (gly residues) spans 321 to 330 (GYGGGAGAGP).

The protein belongs to the SIX/Sine oculis homeobox family. As to expression, expressed during early development of the head. First expressed in a band around the anterior end of stage 5 blastoderm embryo, at 93% to 85% egg length. By gastrula stage, site of expression shifts to the dorsal-anterior region. At stage 12, expression is found in the clypeolabrum, the stomodaeum, and in ectoderm dorsal to the future supraesophageal ganglion.

Its subcellular location is the nucleus. May be involved in head or eye development; development of the clypeolabrum and several head sensory organs. The protein is Protein Optix (Optix) of Drosophila melanogaster (Fruit fly).